The following is a 550-amino-acid chain: Flagellin (550 aa).

The protein belongs to the bacterial flagellin family.

Its subcellular location is the secreted. It localises to the bacterial flagellum. Its function is as follows. Flagellin is the subunit protein which polymerizes to form the filaments of bacterial flagella. This Shigella flexneri protein is Flagellin (fliC).